A 369-amino-acid polypeptide reads, in one-letter code: Isopentenyl-diphosphate delta-isomerase (369 aa).

9 to 10 (RK) contributes to the substrate binding site. Residues T65, 66 to 68 (GMT), S96, and N125 contribute to the FMN site. 96–98 (SQR) serves as a coordination point for substrate. Q160 serves as a coordination point for substrate. E161 serves as a coordination point for Mg(2+). Residues K193, S218, T223, 275-277 (GVR), and 296-297 (AL) contribute to the FMN site.

The protein belongs to the IPP isomerase type 2 family. Homooctamer. Dimer of tetramers. The cofactor is FMN. NADPH serves as cofactor. Requires Mg(2+) as cofactor.

It is found in the cytoplasm. The enzyme catalyses isopentenyl diphosphate = dimethylallyl diphosphate. Functionally, involved in the biosynthesis of isoprenoids. Catalyzes the 1,3-allylic rearrangement of the homoallylic substrate isopentenyl (IPP) to its allylic isomer, dimethylallyl diphosphate (DMAPP). This is Isopentenyl-diphosphate delta-isomerase from Sulfurisphaera tokodaii (strain DSM 16993 / JCM 10545 / NBRC 100140 / 7) (Sulfolobus tokodaii).